The following is a 610-amino-acid chain: T-cell immunomodulatory protein (610 aa).

An N-terminal signal peptide occupies residues 1–32 (MAAGLLPSARAVLALLFLGLALLSVGPAPAQA). N-linked (GlcNAc...) asparagine glycosylation is found at asparagine 35, asparagine 94, asparagine 123, asparagine 138, asparagine 145, asparagine 150, asparagine 175, and asparagine 241. Residues 98–135 (LVTSVVPGDYDGDSQMDVLLTYFPQNHSNNELGAVIFW) form an FG-GAP 1; atypical repeat. The FG-GAP 2; atypical repeat unit spans residues 153 to 183 (FHDQPLIMDFNGDLIPDVFAITNESSQPQIL). An FG-GAP 3; atypical repeat occupies 256 to 291 (VVGQSAFADFDGDGHMDHLLPGCEDKDCQKSAIYLM). Asparagine 351, asparagine 369, and asparagine 480 each carry an N-linked (GlcNAc...) asparagine glycan. The chain crosses the membrane as a helical span at residues 564 to 584 (IVLLTAVALTGVCVFILAIIA).

It belongs to the TIP family. In terms of assembly, interacts with RUVBL1, RUVBL2 and alpha-tubulin.

It is found in the secreted. Its subcellular location is the cell membrane. Functionally, modulator of T-cell function. Has a protective effect in graft versus host disease model. The sequence is that of T-cell immunomodulatory protein from Rattus norvegicus (Rat).